Consider the following 361-residue polypeptide: Phospho-N-acetylmuramoyl-pentapeptide-transferase (361 aa).

10 helical membrane-spanning segments follow: residues arginine 25–isoleucine 45, threonine 73–leucine 93, valine 98–isoleucine 118, isoleucine 139–threonine 159, isoleucine 168–phenylalanine 188, glycine 200–serine 220, alanine 237–phenylalanine 257, valine 264–isoleucine 284, methionine 289–valine 309, and valine 339–lysine 359.

Belongs to the glycosyltransferase 4 family. MraY subfamily. Requires Mg(2+) as cofactor.

The protein resides in the cell inner membrane. The catalysed reaction is UDP-N-acetyl-alpha-D-muramoyl-L-alanyl-gamma-D-glutamyl-meso-2,6-diaminopimeloyl-D-alanyl-D-alanine + di-trans,octa-cis-undecaprenyl phosphate = di-trans,octa-cis-undecaprenyl diphospho-N-acetyl-alpha-D-muramoyl-L-alanyl-D-glutamyl-meso-2,6-diaminopimeloyl-D-alanyl-D-alanine + UMP. It functions in the pathway cell wall biogenesis; peptidoglycan biosynthesis. In terms of biological role, catalyzes the initial step of the lipid cycle reactions in the biosynthesis of the cell wall peptidoglycan: transfers peptidoglycan precursor phospho-MurNAc-pentapeptide from UDP-MurNAc-pentapeptide onto the lipid carrier undecaprenyl phosphate, yielding undecaprenyl-pyrophosphoryl-MurNAc-pentapeptide, known as lipid I. The sequence is that of Phospho-N-acetylmuramoyl-pentapeptide-transferase from Xanthomonas oryzae pv. oryzae (strain MAFF 311018).